We begin with the raw amino-acid sequence, 501 residues long: Aspartyl/glutamyl-tRNA(Asn/Gln) amidotransferase subunit B (501 aa).

A disordered region spans residues 272–291; that stretch reads QETRHYQETDGTTSKGRPKE.

Belongs to the GatB/GatE family. GatB subfamily. As to quaternary structure, heterotrimer of A, B and C subunits.

The enzyme catalyses L-glutamyl-tRNA(Gln) + L-glutamine + ATP + H2O = L-glutaminyl-tRNA(Gln) + L-glutamate + ADP + phosphate + H(+). It carries out the reaction L-aspartyl-tRNA(Asn) + L-glutamine + ATP + H2O = L-asparaginyl-tRNA(Asn) + L-glutamate + ADP + phosphate + 2 H(+). In terms of biological role, allows the formation of correctly charged Asn-tRNA(Asn) or Gln-tRNA(Gln) through the transamidation of misacylated Asp-tRNA(Asn) or Glu-tRNA(Gln) in organisms which lack either or both of asparaginyl-tRNA or glutaminyl-tRNA synthetases. The reaction takes place in the presence of glutamine and ATP through an activated phospho-Asp-tRNA(Asn) or phospho-Glu-tRNA(Gln). This chain is Aspartyl/glutamyl-tRNA(Asn/Gln) amidotransferase subunit B, found in Corynebacterium efficiens (strain DSM 44549 / YS-314 / AJ 12310 / JCM 11189 / NBRC 100395).